A 440-amino-acid polypeptide reads, in one-letter code: Chromosome partition protein MukF (440 aa).

The tract at residues 208–236 (LSETSGTLRELQDTLEAAGDKLQANLLRI) is leucine-zipper.

It belongs to the MukF family. In terms of assembly, interacts, and probably forms a ternary complex, with MukE and MukB via its C-terminal region. The complex formation is stimulated by calcium or magnesium. It is required for an interaction between MukE and MukB.

Its subcellular location is the cytoplasm. The protein localises to the nucleoid. In terms of biological role, involved in chromosome condensation, segregation and cell cycle progression. May participate in facilitating chromosome segregation by condensation DNA from both sides of a centrally located replisome during cell division. Not required for mini-F plasmid partitioning. Probably acts via its interaction with MukB and MukE. Overexpression results in anucleate cells. It has a calcium binding activity. The protein is Chromosome partition protein MukF of Serratia proteamaculans (strain 568).